Consider the following 70-residue polypeptide: Small ribosomal subunit protein bS21 (70 aa).

Belongs to the bacterial ribosomal protein bS21 family.

The chain is Small ribosomal subunit protein bS21 from Herminiimonas arsenicoxydans.